The sequence spans 135 residues: MRHYEIVFMVHPDQSEQVPGMIERYTAAITGAEGKIHRLEDWGRRQLAYPINKLHKAHYVLMNVEAPQEVIDELETTFRFNDAVIRSMVMRTKHAVTEASPMVKAKDERRERRDDFANETADDAEAGDSEEEEEE.

N6-acetyllysine is present on Lys93. The segment at 98–135 (EASPMVKAKDERRERRDDFANETADDAEAGDSEEEEEE) is disordered. Residues 104–116 (KAKDERRERRDDF) are compositionally biased toward basic and acidic residues. A compositionally biased stretch (acidic residues) spans 120-135 (TADDAEAGDSEEEEEE).

This sequence belongs to the bacterial ribosomal protein bS6 family. As to quaternary structure, part of the 30S ribosomal subunit. Interacts weakly with uL2 in one of the 3.5 A resolved structures. Post-translationally, 5 different forms of the protein, varying only in the number of C-terminal glutamate residues, were isolated. The sequence shown is form bS6-6, which is the longest. The first two Glu are encoded by the rpsF gene, the other Glu are added post-translationally by the RimK enzyme.

Functionally, binds together with bS18 to 16S ribosomal RNA. The chain is Small ribosomal subunit protein bS6 (rpsF) from Escherichia coli (strain K12).